The sequence spans 180 residues: MARLSAFNFQKWIDEHKHLLKPPVGNQQVWEDADLMVTVVGGPNKRTDYHDDPVEEFFYQLKGDMVLKLYEGGEFYDVPIREGDIFLLPPHVRHSPQRPQEGSIGLVIEPKRPEGAHDAIEWFCFGCGSLVHRAELLLESIVRDLPPVYQAFYADEQARTCPNCGEIHPGKEPPEGWVKL.

R46 is a binding site for O2. Fe cation-binding residues include H50, E56, and H94. E56 contacts substrate. R98 and E109 together coordinate substrate. Fe cation-binding residues include C124, C127, C161, and C164.

This sequence belongs to the 3-HAO family. Homodimer. Requires Fe(2+) as cofactor.

The catalysed reaction is 3-hydroxyanthranilate + O2 = (2Z,4Z)-2-amino-3-carboxymuconate 6-semialdehyde. It participates in cofactor biosynthesis; NAD(+) biosynthesis; quinolinate from L-kynurenine: step 3/3. In terms of biological role, catalyzes the oxidative ring opening of 3-hydroxyanthranilate to 2-amino-3-carboxymuconate semialdehyde, which spontaneously cyclizes to quinolinate. The chain is 3-hydroxyanthranilate 3,4-dioxygenase from Ruegeria pomeroyi (strain ATCC 700808 / DSM 15171 / DSS-3) (Silicibacter pomeroyi).